A 601-amino-acid chain; its full sequence is Glutathione-regulated potassium-efflux system protein KefB (601 aa).

Helical transmembrane passes span 4–24 (SDLLLAGVLFLFAAVIAVPLA), 29–49 (IGAVLGYLLAGIAIGPWGLGF), 55–75 (EILHFSELGVVFLMFIIGLEL), 87–107 (IFGVGAAQVMLSAAILGGLLM), 115–135 (AAVVGGIGLAMSSTAMALQLM), 152–172 (VLLFQDLAVIPALALVPLLAG), 177–197 (HVNWLTVGMKVLAFAGMLIGG), 207–227 (FIASSGVREVFTAATLLLVLG), 230–250 (LFMEALGLSMALGTFIAGVLL), 268–288 (GLLLGLFFISVGMALNLGVLY), 291–311 (LLWVAVSVAVLVAVKMLVLYL), 326–346 (FAGVLSQGGEFAFVLFSLPAS), and 356–376 (ALLLVAVTLSMMTTPLLMKGI). The 120-residue stretch at 400–519 (KPQVIIVGFG…AGVTQFSRET (120 aa)) folds into the RCK N-terminal domain.

Belongs to the monovalent cation:proton antiporter 2 (CPA2) transporter (TC 2.A.37) family. KefB subfamily. Interacts with the regulatory subunit KefG.

Its subcellular location is the cell inner membrane. Its function is as follows. Pore-forming subunit of a potassium efflux system that confers protection against electrophiles. Catalyzes K(+)/H(+) antiport. This chain is Glutathione-regulated potassium-efflux system protein KefB, found in Klebsiella pneumoniae (strain 342).